The sequence spans 126 residues: UPF0235 protein C15orf40 homolog (126 aa).

The disordered stretch occupies residues 1–33 (MPKKAGATSKGKNQTKEPETPPPPTGPVATDSK). Serine 89 is subject to Phosphoserine.

This sequence belongs to the UPF0235 family.

The chain is UPF0235 protein C15orf40 homolog from Rattus norvegicus (Rat).